Reading from the N-terminus, the 335-residue chain is DNA-directed RNA polymerase subunit alpha (335 aa).

Positions 1-233 are alpha N-terminal domain (alpha-NTD); the sequence is MMLNATEFLT…QQISIFVDLE (233 aa). An alpha C-terminal domain (alpha-CTD) region spans residues 247 to 335; that stretch reads VDPVLLRPVD…VDDRFSYRSR (89 aa).

It belongs to the RNA polymerase alpha chain family. As to quaternary structure, homodimer. The RNAP catalytic core consists of 2 alpha, 1 beta, 1 beta' and 1 omega subunit. When a sigma factor is associated with the core the holoenzyme is formed, which can initiate transcription.

The catalysed reaction is RNA(n) + a ribonucleoside 5'-triphosphate = RNA(n+1) + diphosphate. In terms of biological role, DNA-dependent RNA polymerase catalyzes the transcription of DNA into RNA using the four ribonucleoside triphosphates as substrates. The polypeptide is DNA-directed RNA polymerase subunit alpha (Psychrobacter sp. (strain PRwf-1)).